We begin with the raw amino-acid sequence, 564 residues long: MSRRAYAEMYGPTTGDRIRLADTELLIEVERDHTLYGEEVKFGGGKVIRDGMGQSQLPAADVADTVITNAVILDHWGIVKADIAIKHGRIAAIGKAGNPDIQPGVTIAIGAATEIIAGEGLIVTAGGIDTHIHFISPQQIDEALASGVTTMIGGGTGPATGTNATTCTPGPWHMERMLQAADGWPINLGFLGKGNASRPQPLVEQIEAGAIGLKLHEDWGTTPAAIDNCLTVADDTDTQVAIHTDTLNEAGFVEATVAAFKGRTIHTYHTEGAGGGHAPDILKVCGEANVLPSSTNPTRPYTINTLDEHLDMLMVCHHLDPSIAEDLAFAESRIRRETIAAEDILHDLGALSMLSSDSQAMGRVGEVIIRTWQTAHKMKVQRGALTGDGARNDNFRAKRYVAKYTINPALTHGIAHEVGSIEPGKWADLVLWEPAFFGVKPAMIVKGGMIAVAQMGDPNASIPTPQPVHYREMFATRGGALARTSLTFVSQLALDAGIGARYGLAKRLVPVRGCRTVTKRDMIHNAWQPAIRVDPETYDVVADGALLTCEPAAVLPMAQRYFLF.

Residues 126–564 (GGIDTHIHFI…LPMAQRYFLF (439 aa)) form the Urease domain. Positions 131, 133, and 214 each coordinate Ni(2+). Lysine 214 bears the N6-carboxylysine mark. Histidine 216 is a binding site for substrate. 2 residues coordinate Ni(2+): histidine 243 and histidine 269. Catalysis depends on histidine 317, which acts as the Proton donor. Aspartate 357 provides a ligand contact to Ni(2+).

The protein belongs to the metallo-dependent hydrolases superfamily. Urease alpha subunit family. As to quaternary structure, heterotrimer of UreA (gamma), UreB (beta) and UreC (alpha) subunits. Three heterotrimers associate to form the active enzyme. Ni cation serves as cofactor. Post-translationally, carboxylation allows a single lysine to coordinate two nickel ions.

It is found in the cytoplasm. The enzyme catalyses urea + 2 H2O + H(+) = hydrogencarbonate + 2 NH4(+). The protein operates within nitrogen metabolism; urea degradation; CO(2) and NH(3) from urea (urease route): step 1/1. This Burkholderia pseudomallei (strain 1710b) protein is Urease subunit alpha.